A 306-amino-acid chain; its full sequence is Ribonuclease BN (306 aa).

Zn(2+) is bound by residues His-64, His-66, Asp-68, His-69, His-141, Asp-212, and His-270. Asp-68 (proton acceptor) is an active-site residue.

Belongs to the RNase Z family. RNase BN subfamily. In terms of assembly, homodimer. The cofactor is Zn(2+).

Its function is as follows. Zinc phosphodiesterase, which has both exoribonuclease and endoribonuclease activities. The polypeptide is Ribonuclease BN (Klebsiella pneumoniae (strain 342)).